The sequence spans 314 residues: Ribosomal RNA small subunit methyltransferase H (314 aa).

Residues 36 to 38 (GGH), Asp-56, Phe-81, Asp-103, and Gln-110 each bind S-adenosyl-L-methionine.

The protein belongs to the methyltransferase superfamily. RsmH family.

The protein resides in the cytoplasm. It carries out the reaction cytidine(1402) in 16S rRNA + S-adenosyl-L-methionine = N(4)-methylcytidine(1402) in 16S rRNA + S-adenosyl-L-homocysteine + H(+). Its function is as follows. Specifically methylates the N4 position of cytidine in position 1402 (C1402) of 16S rRNA. This is Ribosomal RNA small subunit methyltransferase H from Shewanella sediminis (strain HAW-EB3).